The chain runs to 466 residues: Putative D-3-phosphoglycerate dehydrogenase (466 aa).

A compositionally biased stretch (basic and acidic residues) spans 1–15 (MDIKGGRRGNVEDSL). The disordered stretch occupies residues 1–26 (MDIKGGRRGNVEDSLNKLSLSPPDNN). The segment covering 16–26 (NKLSLSPPDNN) has biased composition (polar residues). Ser-87 carries the phosphoserine modification. Residues 205–206 (HI) and Asp-225 contribute to the NAD(+) site. A Phosphoserine modification is found at Ser-258. NAD(+) is bound by residues 282–284 (ASR) and Asp-308. The active site involves Arg-284. Residue Glu-313 is part of the active site. The active-site Proton donor is the His-344. Residue 344 to 347 (HIGG) coordinates NAD(+). The ACT domain occupies 396 to 466 (RVLFVHRNVP…PCKINTRLLY (71 aa)).

Belongs to the D-isomer specific 2-hydroxyacid dehydrogenase family.

It carries out the reaction (2R)-3-phosphoglycerate + NAD(+) = 3-phosphooxypyruvate + NADH + H(+). The catalysed reaction is (R)-2-hydroxyglutarate + NAD(+) = 2-oxoglutarate + NADH + H(+). It functions in the pathway amino-acid biosynthesis; L-serine biosynthesis; L-serine from 3-phospho-D-glycerate: step 1/3. Its function is as follows. Catalyzes the reversible oxidation of 3-phospho-D-glycerate to 3-phosphonooxypyruvate, the first step of the phosphorylated L-serine biosynthesis pathway. Also catalyzes the reversible oxidation of 2-hydroxyglutarate to 2-oxoglutarate. The polypeptide is Putative D-3-phosphoglycerate dehydrogenase (Schizosaccharomyces pombe (strain 972 / ATCC 24843) (Fission yeast)).